A 377-amino-acid chain; its full sequence is UDP-N-acetylenolpyruvoylglucosamine reductase (377 aa).

The FAD-binding PCMH-type domain maps to 48 to 215 (LGGTPMAAVR…LGITLQLHTD (168 aa)). Arg193 is an active-site residue. The active-site Proton donor is the Ser268. Glu369 is a catalytic residue.

It belongs to the MurB family. FAD is required as a cofactor.

It is found in the cytoplasm. It catalyses the reaction UDP-N-acetyl-alpha-D-muramate + NADP(+) = UDP-N-acetyl-3-O-(1-carboxyvinyl)-alpha-D-glucosamine + NADPH + H(+). The protein operates within cell wall biogenesis; peptidoglycan biosynthesis. Its function is as follows. Cell wall formation. This Corynebacterium diphtheriae (strain ATCC 700971 / NCTC 13129 / Biotype gravis) protein is UDP-N-acetylenolpyruvoylglucosamine reductase.